The sequence spans 179 residues: ATP synthase subunit delta (179 aa).

The protein belongs to the ATPase delta chain family. As to quaternary structure, F-type ATPases have 2 components, F(1) - the catalytic core - and F(0) - the membrane proton channel. F(1) has five subunits: alpha(3), beta(3), gamma(1), delta(1), epsilon(1). F(0) has three main subunits: a(1), b(2) and c(10-14). The alpha and beta chains form an alternating ring which encloses part of the gamma chain. F(1) is attached to F(0) by a central stalk formed by the gamma and epsilon chains, while a peripheral stalk is formed by the delta and b chains.

It is found in the cell membrane. In terms of biological role, f(1)F(0) ATP synthase produces ATP from ADP in the presence of a proton or sodium gradient. F-type ATPases consist of two structural domains, F(1) containing the extramembraneous catalytic core and F(0) containing the membrane proton channel, linked together by a central stalk and a peripheral stalk. During catalysis, ATP synthesis in the catalytic domain of F(1) is coupled via a rotary mechanism of the central stalk subunits to proton translocation. This protein is part of the stalk that links CF(0) to CF(1). It either transmits conformational changes from CF(0) to CF(1) or is implicated in proton conduction. The sequence is that of ATP synthase subunit delta from Rubrobacter xylanophilus (strain DSM 9941 / JCM 11954 / NBRC 16129 / PRD-1).